We begin with the raw amino-acid sequence, 367 residues long: Probable thylakoidal processing peptidase 2, chloroplastic (367 aa).

A chloroplast-targeting transit peptide spans 1 to 68 (MAIRVTFTYS…NTWGPSSGPR (68 aa)). Residues 53–72 (DKSPGSNTWGPSSGPRARPA) form a disordered region. Low complexity predominate over residues 62–72 (GPSSGPRARPA). A helical transmembrane segment spans residues 185-205 (EDAKAAFTAVTVSLLFRSALA). Residues 206-367 (EPKSIPSTSM…VSQKRAVDVS (162 aa)) lie on the Lumenal, thylakoid side of the membrane. S214 is a catalytic residue.

It belongs to the peptidase S26 family.

It is found in the plastid. It localises to the chloroplast thylakoid membrane. It catalyses the reaction Cleavage of hydrophobic, N-terminal signal or leader sequences from secreted and periplasmic proteins.. Functionally, cleaves the thylakoid-transfer domain from a chloroplast protein. The sequence is that of Probable thylakoidal processing peptidase 2, chloroplastic (TPP2) from Arabidopsis thaliana (Mouse-ear cress).